The chain runs to 530 residues: FSD1-like protein (530 aa).

M1 is modified (N-acetylmethionine). The stretch at 102 to 141 (KQEQARKSQELQSQISQCNNALENSEELLEFATRSLDIKE) forms a coiled coil. Residues 137–194 (LDIKEPEEFSKAARQIKDRVTMASAFRLSLKPKVSDNMTHLMVDFSQERQMLQTLKFL) form the COS domain. Residues 196–300 (VPKAPEIDPV…DPVTLETKAL (105 aa)) enclose the Fibronectin type-III domain. The B30.2/SPRY domain occupies 300–506 (LNFNLDNSSS…LSTGMQVPSA (207 aa)). A disordered region spans residues 322 to 366 (WDPTGGKGQESKIKGKENKGRSGTPSPKRTSVGSRPPAVRGSRDR). Residues 330–341 (QESKIKGKENKG) show a composition bias toward basic and acidic residues. Over residues 342–354 (RSGTPSPKRTSVG) the composition is skewed to polar residues. Phosphoserine is present on residues S520 and S523.

The polypeptide is FSD1-like protein (FSD1L) (Homo sapiens (Human)).